Consider the following 141-residue polypeptide: Large ribosomal subunit protein uL11 (141 aa).

It belongs to the universal ribosomal protein uL11 family. In terms of assembly, part of the ribosomal stalk of the 50S ribosomal subunit. Interacts with L10 and the large rRNA to form the base of the stalk. L10 forms an elongated spine to which L12 dimers bind in a sequential fashion forming a multimeric L10(L12)X complex. In terms of processing, one or more lysine residues are methylated.

Functionally, forms part of the ribosomal stalk which helps the ribosome interact with GTP-bound translation factors. This is Large ribosomal subunit protein uL11 from Fervidobacterium nodosum (strain ATCC 35602 / DSM 5306 / Rt17-B1).